The following is a 585-amino-acid chain: Phosphomethylpyrimidine synthase (585 aa).

Over residues 89–107 the composition is skewed to basic and acidic residues; it reads RGDTESYEGRHVKPEDNGY. A disordered region spans residues 89 to 116; that stretch reads RGDTESYEGRHVKPEDNGYRSRNGSHQH. Substrate is bound by residues Asn-199, Met-228, Tyr-257, His-293, 313-315, 354-357, and Glu-393; these read SRG and DGLR. His-397 lines the Zn(2+) pocket. Tyr-420 is a binding site for substrate. His-461 lines the Zn(2+) pocket. Residues Cys-541, Cys-544, and Cys-549 each contribute to the [4Fe-4S] cluster site.

It belongs to the ThiC family. It depends on [4Fe-4S] cluster as a cofactor.

The catalysed reaction is 5-amino-1-(5-phospho-beta-D-ribosyl)imidazole + S-adenosyl-L-methionine = 4-amino-2-methyl-5-(phosphooxymethyl)pyrimidine + CO + 5'-deoxyadenosine + formate + L-methionine + 3 H(+). Its pathway is cofactor biosynthesis; thiamine diphosphate biosynthesis. Functionally, catalyzes the synthesis of the hydroxymethylpyrimidine phosphate (HMP-P) moiety of thiamine from aminoimidazole ribotide (AIR) in a radical S-adenosyl-L-methionine (SAM)-dependent reaction. This Bacillus pumilus (strain SAFR-032) protein is Phosphomethylpyrimidine synthase.